Reading from the N-terminus, the 242-residue chain is Phosphoribosylaminoimidazole-succinocarboxamide synthase (242 aa).

It belongs to the SAICAR synthetase family.

It carries out the reaction 5-amino-1-(5-phospho-D-ribosyl)imidazole-4-carboxylate + L-aspartate + ATP = (2S)-2-[5-amino-1-(5-phospho-beta-D-ribosyl)imidazole-4-carboxamido]succinate + ADP + phosphate + 2 H(+). Its pathway is purine metabolism; IMP biosynthesis via de novo pathway; 5-amino-1-(5-phospho-D-ribosyl)imidazole-4-carboxamide from 5-amino-1-(5-phospho-D-ribosyl)imidazole-4-carboxylate: step 1/2. This is Phosphoribosylaminoimidazole-succinocarboxamide synthase from Pediococcus pentosaceus (strain ATCC 25745 / CCUG 21536 / LMG 10740 / 183-1w).